A 73-amino-acid polypeptide reads, in one-letter code: Large ribosomal subunit protein bL31 (73 aa).

Belongs to the bacterial ribosomal protein bL31 family. Type A subfamily. As to quaternary structure, part of the 50S ribosomal subunit.

Functionally, binds the 23S rRNA. The polypeptide is Large ribosomal subunit protein bL31 (Bartonella henselae (strain ATCC 49882 / DSM 28221 / CCUG 30454 / Houston 1) (Rochalimaea henselae)).